Reading from the N-terminus, the 225-residue chain is Helicostatins (225 aa).

An N-terminal signal peptide occupies residues 1–18 (MLYSSLPVCFLVLGAALC). The propeptide occupies 19-48 (APERMQNEAEPHDLQPHEAEPHSDHVAPLA). Leucine amide occurs at positions 58, 79, and 90. Residues 94-127 (SVDEDQSNDEQQLTTSDLDQAALAELFDQYDDAE) constitute a propeptide that is removed on maturation. Residue Leu-137 is modified to Leucine amide. Positions 141–149 (FADDETSEE) are excised as a propeptide. Residues Leu-159, Leu-170, Leu-181, Leu-192, and Leu-206 each carry the leucine amide modification. Positions 205 to 225 (GLGKRSGDDVSADDSDNYFDV) are disordered. Residues 210-225 (SGDDVSADDSDNYFDV) constitute a propeptide that is removed on maturation. The segment covering 214 to 225 (VSADDSDNYFDV) has biased composition (acidic residues).

Belongs to the allatostatin family. Highly expressed in the CNS and gut of larvae. Also expressed in the cells of the larval brain and ventral nerve cord and in endocrine cells of the midgut.

It is found in the secreted. Its function is as follows. May act as a neurotransmitter or neuromodulator. In Helicoverpa armigera (Cotton bollworm), this protein is Helicostatins.